Consider the following 385-residue polypeptide: 1-deoxy-D-xylulose 5-phosphate reductoisomerase (385 aa).

Residues T11, G12, S13, I14, N39, and N123 each contribute to the NADPH site. K124 provides a ligand contact to 1-deoxy-D-xylulose 5-phosphate. NADPH is bound at residue E125. Residue D149 coordinates Mn(2+). Positions 150, 151, 174, and 197 each coordinate 1-deoxy-D-xylulose 5-phosphate. E151 contributes to the Mn(2+) binding site. G203 contacts NADPH. S210, N215, K216, and E219 together coordinate 1-deoxy-D-xylulose 5-phosphate. Position 219 (E219) interacts with Mn(2+).

Belongs to the DXR family. The cofactor is Mg(2+). Requires Mn(2+) as cofactor.

It carries out the reaction 2-C-methyl-D-erythritol 4-phosphate + NADP(+) = 1-deoxy-D-xylulose 5-phosphate + NADPH + H(+). The protein operates within isoprenoid biosynthesis; isopentenyl diphosphate biosynthesis via DXP pathway; isopentenyl diphosphate from 1-deoxy-D-xylulose 5-phosphate: step 1/6. Catalyzes the NADPH-dependent rearrangement and reduction of 1-deoxy-D-xylulose-5-phosphate (DXP) to 2-C-methyl-D-erythritol 4-phosphate (MEP). The chain is 1-deoxy-D-xylulose 5-phosphate reductoisomerase from Porphyromonas gingivalis (strain ATCC 33277 / DSM 20709 / CIP 103683 / JCM 12257 / NCTC 11834 / 2561).